Reading from the N-terminus, the 801-residue chain is MAEAHQASSLLSSLSSDGAEVELSSSVWQEIYLSALRSWKRNLWRVWNDFLAGVVPATPLSWLFLFSTIQLACLLQLDPSLGLMEKIKELLPDWGGQHHQLQGLLAAAVFASCLWGTLIFTLHVALRLLLSHHGWLLEPHGTMSSPTKTWLALVRIFSGRHPRLFSFQRALPRQPVPGAQETVRKYLESMRPVLRDDAFDSVVALANDFLRLQAPRLQLYLQLKSWCASNYVSDWWEEFVYLRSRGSLVNSTYYMMDFLYVTPTPLQAARAGNAVHTLLLYRHLLNRQEIPPTLLMGMRPLCSAQYERMFNTTRIPGVEKDYLCHLQDSQHVAVFHQGRFFRVGTHSSNGLLSPRALEQQFQYILDDPSPACPLEEHLAALTAAPRSMWAQVRESVKTHAATALETVEGAAFFVSLDSEPAGLTRENPAASLDTYAHTLLTGQGHDRWFDKSFTLIVFSNGKLGLSVEHSWADCPVAGHLWEFTLATECFQLGYATDGHCKGHPDPALPKPQRLQWDLPKQIQPSISLALRGAKTLSGNIDCHVFPFFHFGKSFIKGCHVSSDSFIQLVLQLAHFRDRGQFCLTYESAMTRLFLEGRTETVRSCTREACQFVRAMENKERTDQQCLALFREAVDKHQALLKAAMSGQGIDRHLFALYIMSRLLHMQSPFLTQVQSQQWLLSTSQIPVQQTHLFDVHNYPDYVSSGGGFGPAHDHGYGVSYIFMGENAISFHISSKQSSTETDSHRLGQHIEDALLDVASLFQAGQQFKRQFTGLGESSGWKYSNLSCKTVDPNIPKSSTNL.

The Cytoplasmic portion of the chain corresponds to 1–49 (MAEAHQASSLLSSLSSDGAEVELSSSVWQEIYLSALRSWKRNLWRVWND). Residues 50–70 (FLAGVVPATPLSWLFLFSTIQ) traverse the membrane as a helical segment. The Mitochondrial intermembrane segment spans residues 71 to 103 (LACLLQLDPSLGLMEKIKELLPDWGGQHHQLQG). Residues 104 to 124 (LLAAAVFASCLWGTLIFTLHV) form a helical membrane-spanning segment. The Cytoplasmic segment spans residues 125 to 801 (ALRLLLSHHG…PNIPKSSTNL (677 aa)). The active-site Proton acceptor is the histidine 469. 551 to 563 (GKSFIKGCHVSSD) provides a ligand contact to CoA. Residues tyrosine 585, serine 587, and threonine 598 each contribute to the (R)-carnitine site. The segment at 760–801 (LFQAGQQFKRQFTGLGESSGWKYSNLSCKTVDPNIPKSSTNL) is required for interaction with GRIA1.

The protein belongs to the carnitine/choline acetyltransferase family. In terms of assembly, peripherally associated with AMPAR complex. AMPAR complex consists of an inner core made of 4 pore-forming GluA/GRIA proteins (GRIA1, GRIA2, GRIA3 and GRIA4) and 4 major auxiliary subunits arranged in a twofold symmetry. One of the two pairs of distinct binding sites is occupied either by CNIH2, CNIH3 or CACNG2, CACNG3. The other harbors CACNG2, CACNG3, CACNG4, CACNG8 or GSG1L. This inner core of AMPAR complex is complemented by outer core constituents binding directly to the GluA/GRIA proteins at sites distinct from the interaction sites of the inner core constituents. Outer core constituents include at least PRRT1, PRRT2, CKAMP44/SHISA9, FRRS1L and NRN1. The proteins of the inner and outer core serve as a platform for other, more peripherally associated AMPAR constituents, including CPT1C. Alone or in combination, these auxiliary subunits control the gating and pharmacology of the AMPAR complex and profoundly impact their biogenesis and protein processing. Interacts with SACM1L; the interaction regulates SACM1L phosphatidylinositol-3-phosphatase activity and translocation to endoplasmic reticulum/trans Golgi network in a malonyl-CoA dependent manner. Interacts with ATL1. As to expression, expressed in brain (at protein level).

The protein localises to the synapse. It is found in the cell projection. It localises to the dendrite. The protein resides in the axon. Its subcellular location is the endoplasmic reticulum membrane. It catalyses the reaction S-hexadecanoyl-L-cysteinyl-[protein] + H2O = L-cysteinyl-[protein] + hexadecanoate + H(+). Functionally, palmitoyl thioesterase specifically expressed in the endoplasmic reticulum of neurons. Modulates the trafficking of the glutamate receptor, AMPAR, to plasma membrane through depalmitoylation of GRIA1. Also regulates AMPR trafficking through the regulation of SACM1L phosphatidylinositol-3-phosphatase activity by interaction in a malonyl-CoA dependent manner. Binds malonyl-CoA and couples malonyl-CoA to ceramide levels, necessary for proper spine maturation and contributing to systemic energy homeostasis and appetite control. Binds to palmitoyl-CoA, but does not have carnitine palmitoyltransferase 1 catalytic activity or at very low levels. This Rattus norvegicus (Rat) protein is Palmitoyl thioesterase CPT1C (Cpt1c).